Here is a 548-residue protein sequence, read N- to C-terminus: uncharacterized protein (548 aa).

Short-chain dehydrogenase/reductase regions lie at residues 1-250 (MDDR…WMSV) and 271-548 (PVED…LLSP). 12 to 37 (IVVTGAAGGIGRALVDIFAANGDVVV) provides a ligand contact to NADP(+). Ser141 lines the substrate pocket. Residue Tyr154 is the Proton acceptor of the active site. Position 280–304 (280–304 (VIVMGGATGVGAAIARRFAENGDTV)) interacts with NADP(+). The active-site Proton acceptor is Tyr420.

This sequence belongs to the short-chain dehydrogenases/reductases (SDR) family.

This is an uncharacterized protein from Sinorhizobium fredii (strain NBRC 101917 / NGR234).